We begin with the raw amino-acid sequence, 942 residues long: Eukaryotic translation initiation factor 3 subunit A (942 aa).

The 175-residue stretch at 320-494 folds into the PCI domain; that stretch reads FKKYSSIILL…NTVTFFKDPF (175 aa). 4 coiled-coil regions span residues 499–529, 588–669, 705–734, and 821–912; these read KAAG…GEEI, ITQT…KQRE, SKLS…AYRK, and IEEV…RKAQ. Residues 502–546 form a disordered region; it reads GTVEEEEEEEEEEGEEVEGEEAETGEEIVEEGEEHENEENKEPEP. A compositionally biased stretch (acidic residues) spans 504-538; it reads VEEEEEEEEEEGEEVEGEEAETGEEIVEEGEEHEN. 2 stretches are compositionally biased toward basic and acidic residues: residues 836–870 and 889–911; these read RKAE…ERKS and RSAK…ERKA. The interval 836-942 is disordered; the sequence is RKAEIEAEER…KMKLRRASKK (107 aa).

It belongs to the eIF-3 subunit A family. As to quaternary structure, component of the eukaryotic translation initiation factor 3 (eIF-3) complex.

The protein localises to the cytoplasm. RNA-binding component of the eukaryotic translation initiation factor 3 (eIF-3) complex, which is involved in protein synthesis of a specialized repertoire of mRNAs and, together with other initiation factors, stimulates binding of mRNA and methionyl-tRNAi to the 40S ribosome. The eIF-3 complex specifically targets and initiates translation of a subset of mRNAs involved in cell proliferation. The sequence is that of Eukaryotic translation initiation factor 3 subunit A from Vanderwaltozyma polyspora (strain ATCC 22028 / DSM 70294 / BCRC 21397 / CBS 2163 / NBRC 10782 / NRRL Y-8283 / UCD 57-17) (Kluyveromyces polysporus).